Consider the following 84-residue polypeptide: Putative membrane protein insertion efficiency factor (84 aa).

It belongs to the UPF0161 family.

It localises to the cell inner membrane. In terms of biological role, could be involved in insertion of integral membrane proteins into the membrane. This Shewanella sp. (strain ANA-3) protein is Putative membrane protein insertion efficiency factor.